The sequence spans 212 residues: Protein-L-isoaspartate O-methyltransferase (212 aa).

Ser-60 is an active-site residue.

This sequence belongs to the methyltransferase superfamily. L-isoaspartyl/D-aspartyl protein methyltransferase family.

The protein resides in the cytoplasm. The enzyme catalyses [protein]-L-isoaspartate + S-adenosyl-L-methionine = [protein]-L-isoaspartate alpha-methyl ester + S-adenosyl-L-homocysteine. Catalyzes the methyl esterification of L-isoaspartyl residues in peptides and proteins that result from spontaneous decomposition of normal L-aspartyl and L-asparaginyl residues. It plays a role in the repair and/or degradation of damaged proteins. In Pseudomonas putida (strain ATCC 700007 / DSM 6899 / JCM 31910 / BCRC 17059 / LMG 24140 / F1), this protein is Protein-L-isoaspartate O-methyltransferase.